Here is a 272-residue protein sequence, read N- to C-terminus: 2-C-methyl-D-erythritol 4-phosphate cytidylyltransferase (272 aa).

It belongs to the IspD/TarI cytidylyltransferase family. IspD subfamily.

It catalyses the reaction 2-C-methyl-D-erythritol 4-phosphate + CTP + H(+) = 4-CDP-2-C-methyl-D-erythritol + diphosphate. Its pathway is isoprenoid biosynthesis; isopentenyl diphosphate biosynthesis via DXP pathway; isopentenyl diphosphate from 1-deoxy-D-xylulose 5-phosphate: step 2/6. Functionally, catalyzes the formation of 4-diphosphocytidyl-2-C-methyl-D-erythritol from CTP and 2-C-methyl-D-erythritol 4-phosphate (MEP). The protein is 2-C-methyl-D-erythritol 4-phosphate cytidylyltransferase of Xanthomonas oryzae pv. oryzae (strain PXO99A).